Reading from the N-terminus, the 889-residue chain is Cytoplasmic aconitate hydratase (889 aa).

Substrate-binding positions include Gln86 and 205–207 (DSH). [4Fe-4S] cluster is bound by residues Cys437, Cys503, and Cys506. Positions 536 and 541 each coordinate substrate. The residue at position 628 (Thr628) is a Phosphothreonine. Residues Arg699 and 779–780 (SR) each bind substrate.

Belongs to the aconitase/IPM isomerase family. As to quaternary structure, interacts (when associated with the 4Fe-4S) with FBXL5. Interacts with frataxin(81-210). [4Fe-4S] cluster serves as cofactor.

Its subcellular location is the cytoplasm. It localises to the cytosol. The enzyme catalyses citrate = D-threo-isocitrate. In terms of biological role, bifunctional iron sensor that switches between 2 activities depending on iron availability. Iron deprivation, promotes its mRNA binding activity through which it regulates the expression of genes involved in iron uptake, sequestration and utilization. Binds to iron-responsive elements (IRES) in the untranslated region of target mRNAs preventing for instance the translation of ferritin and aminolevulinic acid synthase and stabilizing the transferrin receptor mRNA. Conversely, when cellular iron levels are high, binds a 4Fe-4S cluster which precludes RNA binding activity and promotes the aconitase activity, the isomerization of citrate to isocitrate via cis-aconitate. The sequence is that of Cytoplasmic aconitate hydratase (ACO1) from Homo sapiens (Human).